The chain runs to 441 residues: Cortexillin-2 (441 aa).

The segment at 1 to 229 (MDLNKEWEKV…VLYTSLFFHA (229 aa)) is actin-binding. 2 consecutive Calponin-homology (CH) domains span residues 9 to 117 (KVQE…RKYR) and 126 to 231 (KSSE…HAFR). Coiled-coil stretches lie at residues 229–362 (AFRA…RLGL) and 406–430 (SFEE…KYLN).

This sequence belongs to the cortexillin family. Homodimer; parallel.

The protein resides in the cytoplasm. The protein localises to the cytoskeleton. Actin-bundling protein. When linked to F-actin the actin filaments form preferentially anti-parallel bundles that associate into meshworks. Plays a major role in cytokinesis. Negatively regulates cortical localization of rapgap1. This is Cortexillin-2 (ctxB) from Dictyostelium discoideum (Social amoeba).